The sequence spans 28 residues: leu operon leader peptide (28 aa).

Involved in control of the biosynthesis of leucine. This Salmonella typhimurium (strain LT2 / SGSC1412 / ATCC 700720) protein is leu operon leader peptide (leuL).